We begin with the raw amino-acid sequence, 310 residues long: HTH-type transcriptional activator TtdR (310 aa).

The 58-residue stretch at P6–T63 folds into the HTH lysR-type domain. A DNA-binding region (H-T-H motif) is located at residues F23–Q42.

It belongs to the LysR transcriptional regulatory family.

In terms of biological role, positive regulator required for L-tartrate-dependent anaerobic growth on glycerol. Induces expression of the ttdA-ttdB-ygjE operon. The sequence is that of HTH-type transcriptional activator TtdR (ttdR) from Escherichia coli (strain K12).